The chain runs to 105 residues: MNAPLRGQVYRCDLGYGAKPWLIVSNNARNRHTADVVAVRLTTTRRTIPTWVAMGPSDPLTGYVNADNIETLGKDELGDYLGEVTPATMNKINTALATALGLPWP.

It belongs to the PemK/MazF family. As to quaternary structure, forms a complex with cognate antitoxin MazE1.

Functionally, toxic component of a type II toxin-antitoxin (TA) system. Acts as an endoribonuclease on single-strand RNA, cleaving between the first and second bases in the sequence UCGCU. Neutralized by coexpression with cognate antitoxin MazE1. This Mycobacterium bovis (strain ATCC BAA-935 / AF2122/97) protein is Endoribonuclease MazF1 (mazF1).